Here is a 295-residue protein sequence, read N- to C-terminus: Host-inducible protein A (295 aa).

Residues 1–20 are disordered; the sequence is MHLDRSDSNGGSSRYTLDHE.

This sequence belongs to the NopP family.

In Rhizobium fredii (Sinorhizobium fredii), this protein is Host-inducible protein A.